The following is a 359-amino-acid chain: Methyltransferase fsa4 (359 aa).

Residues 198–199 (GG), D224, 248–249 (SF), R264, and R265 contribute to the S-adenosyl-L-methionine site.

It belongs to the class I-like SAM-binding methyltransferase superfamily. Cation-independent O-methyltransferase family.

It participates in mycotoxin biosynthesis. Methyltransferase; part of the gene cluster that mediates the biosynthesis of HIV-1 integrase inhibitor equisetin and of fusarisetin A, both trans-fused decalin-containing tetramic acids showing also antimicrobial activity. The PKS module of fsa1 together with the enoylreductase fsa3 catalyze the formation of the polyketide unit which is then conjugated to L-serine by the condensation domain of the fsa1 NRPS module. Activity of the Dieckmann cyclase domain (RED) results in release of the Dieckmann product intermediate. Diels-Alderase fsa2 is involved in endo-selective Diels-Alder cycloaddition to form the decalin ring, leading to the production of N-desmethylequisetin also called trichosetin. Subsequent N-methylation is carried out by fsa4 to give equisetin. The enzymatic gene responsible for the conversion of equisetin to fusarisetin A has not been identified yet and is probably located outside of the fsa cluster. This chain is Methyltransferase fsa4, found in Fusarium sp. (strain FN080326).